Here is a 207-residue protein sequence, read N- to C-terminus: Putative 3-methyladenine DNA glycosylase (207 aa).

The protein belongs to the DNA glycosylase MPG family.

In Burkholderia cenocepacia (strain HI2424), this protein is Putative 3-methyladenine DNA glycosylase.